We begin with the raw amino-acid sequence, 101 residues long: Putative membrane protein insertion efficiency factor (101 aa).

This sequence belongs to the UPF0161 family.

The protein resides in the cell inner membrane. In terms of biological role, could be involved in insertion of integral membrane proteins into the membrane. The sequence is that of Putative membrane protein insertion efficiency factor from Methylobacterium sp. (strain 4-46).